Consider the following 99-residue polypeptide: MLEQQRNPADALTVSVLNAQSQVTSKPLRDSVKQALRNYLAQLDGQDVNDLYELVLAEVEHPMLDMIMQYTRGNQTRAANMLGINRGTLRKKLKKYGMG.

Positions 75-94 form a DNA-binding region, H-T-H motif; sequence QTRAANMLGINRGTLRKKLK.

The protein belongs to the transcriptional regulatory Fis family. As to quaternary structure, homodimer.

Its function is as follows. Activates ribosomal RNA transcription. Plays a direct role in upstream activation of rRNA promoters. This is DNA-binding protein Fis from Haemophilus influenzae (strain 86-028NP).